The following is a 337-amino-acid chain: MTRLLDASFLLLPVIASTLFGTASAQSTCATKGKPAGKVLQGYWENWDGSANGVHPGFGWTPIENPVIAQNGYNVINAAFPVILSDGTALWEDGMDATVKVATPAEMCQAKAAGATILMSIGGATAGIDLSSSTVADKFISTIVPILKQYNFDGIDIDIETGLVGSGSIGTLSTSQANLIRIIDGVLAQMPANFGLTMAPETAYVTGGSVVYGSIWGSYLPIIKKYVDNGRLWWLNMQYYNGDMYGCSGDSYAAGTVQGFTAQTDCLNNGITIQGTTIKVPYNMQVPGLPAQSGAGGGYMTPALVGQAWDHYNGALKGLMTWSINWDGSKNWTFGDN.

A signal peptide spans 1-25 (MTRLLDASFLLLPVIASTLFGTASA). Residues 38–337 (KVLQGYWENW…GSKNWTFGDN (300 aa)) enclose the GH18 domain. Residue Glu-160 is the Proton donor of the active site. Residue Asn-331 is glycosylated (N-linked (GlcNAc...) asparagine).

It belongs to the glycosyl hydrolase 18 family. Chitinase class V subfamily. Monomer.

It localises to the secreted. The enzyme catalyses Random endo-hydrolysis of N-acetyl-beta-D-glucosaminide (1-&gt;4)-beta-linkages in chitin and chitodextrins.. Functionally, secreted chitinase involved in the degradation of chitin, a component of the cell walls of fungi and exoskeletal elements of some animals (including worms and arthropods). Plays a morphogenetic role during apical growth, cell division and differentiation (cell wall morphogenesis). May be involved in the degradation and further assimilation of phytopathogenic fungi, namely mycoparasitism, the major mechanism accounting for the antagonistic activity against phytopathogenic fungi displayed by Trichoderma. The chain is Endochitinase 37 (chit37) from Trichoderma harzianum (Hypocrea lixii).